Reading from the N-terminus, the 275-residue chain is Elongation factor Ts (275 aa).

An involved in Mg(2+) ion dislocation from EF-Tu region spans residues 80-83 (TDFV).

Belongs to the EF-Ts family.

The protein localises to the cytoplasm. Its function is as follows. Associates with the EF-Tu.GDP complex and induces the exchange of GDP to GTP. It remains bound to the aminoacyl-tRNA.EF-Tu.GTP complex up to the GTP hydrolysis stage on the ribosome. This is Elongation factor Ts from Clavibacter sepedonicus (Clavibacter michiganensis subsp. sepedonicus).